We begin with the raw amino-acid sequence, 497 residues long: NADH-quinone oxidoreductase subunit N (497 aa).

13 helical membrane passes run 12 to 32 (MAPEWIVLAAAIALLVMDLAL), 40 to 60 (PLAWGAAAAAALAMIATAAMI), 80 to 100 (AFKFILLAGGALALLLVAEWA), 116 to 136 (LFALLGAMMMASSGDLLTLFV), 166 to 186 (VINGGIATAIMLFGMSYVFGL), 208 to 228 (LALAFLLLLIGVSFKLATVPF), 240 to 260 (PVPATAFFAVVSKTAGFALLL), 284 to 304 (MQPIITVLAGLTMIIGSVVAL), 316 to 336 (SGIAHAGYLLAGFAAMSWAMI), 341 to 361 (MYLLVYTLMNIGAFAIIAHIV), 383 to 403 (AAALGLFLLSLAGIPGTAGFI), 430 to 450 (TVISYVYYFNLIVQLFFRPTF), and 457 to 477 (LPAGLSTAVVLCALGTLAIGW).

It belongs to the complex I subunit 2 family. As to quaternary structure, NDH-1 is composed of 14 different subunits. Subunits NuoA, H, J, K, L, M, N constitute the membrane sector of the complex.

It localises to the cell membrane. The enzyme catalyses a quinone + NADH + 5 H(+)(in) = a quinol + NAD(+) + 4 H(+)(out). Its function is as follows. NDH-1 shuttles electrons from NADH, via FMN and iron-sulfur (Fe-S) centers, to quinones in the respiratory chain. The immediate electron acceptor for the enzyme in this species is believed to be a menaquinone. Couples the redox reaction to proton translocation (for every two electrons transferred, four hydrogen ions are translocated across the cytoplasmic membrane), and thus conserves the redox energy in a proton gradient. This Geobacillus kaustophilus (strain HTA426) protein is NADH-quinone oxidoreductase subunit N.